The primary structure comprises 248 residues: ATP synthase subunit a (248 aa).

The next 5 helical transmembrane spans lie at 31 to 51 (GQVLIASWIAIALILTVVILG), 90 to 110 (VPYVGTLFLFIFVSNWMGNLF), 129 to 149 (INTTAGLALLTSIMYFVAGIS), 195 to 215 (VIAVLVLLVPLFIPVPVMVLF), and 216 to 236 (LFTGAIQALIFSTLSAAYIGE).

This sequence belongs to the ATPase A chain family. F-type ATPases have 2 components, CF(1) - the catalytic core - and CF(0) - the membrane proton channel. CF(1) has five subunits: alpha(3), beta(3), gamma(1), delta(1), epsilon(1). CF(0) has four main subunits: a, b, b' and c.

It is found in the cellular thylakoid membrane. Key component of the proton channel; it plays a direct role in the translocation of protons across the membrane. The polypeptide is ATP synthase subunit a (Synechococcus sp. (strain JA-2-3B'a(2-13)) (Cyanobacteria bacterium Yellowstone B-Prime)).